The sequence spans 393 residues: S-adenosylmethionine synthase 3 (393 aa).

Glu43 contributes to the K(+) binding site. Glu56 and Gln99 together coordinate L-methionine. Residues Asp167–Lys169, Ser235–Phe238, Asp246, Arg252–Lys253, Ala269, Lys273, and Lys277 each bind ATP. Asp246 is a binding site for L-methionine. Residue Lys277 participates in L-methionine binding.

Belongs to the AdoMet synthase family. Homotetramer. Mn(2+) is required as a cofactor. Requires Mg(2+) as cofactor. It depends on Co(2+) as a cofactor. The cofactor is K(+).

The protein localises to the cytoplasm. The catalysed reaction is L-methionine + ATP + H2O = S-adenosyl-L-methionine + phosphate + diphosphate. It functions in the pathway amino-acid biosynthesis; S-adenosyl-L-methionine biosynthesis; S-adenosyl-L-methionine from L-methionine: step 1/1. In terms of biological role, catalyzes the formation of S-adenosylmethionine from methionine and ATP. The reaction comprises two steps that are both catalyzed by the same enzyme: formation of S-adenosylmethionine (AdoMet) and triphosphate, and subsequent hydrolysis of the triphosphate. This is S-adenosylmethionine synthase 3 (SAM3) from Actinidia chinensis var. chinensis (Chinese soft-hair kiwi).